The primary structure comprises 198 residues: Ribonuclease HII (198 aa).

One can recognise an RNase H type-2 domain in the interval 11–198; sequence NLIAGVDEVG…GPVKRVLGLV (188 aa). A divalent metal cation-binding residues include Asp-17, Glu-18, and Asp-109.

It belongs to the RNase HII family. Requires Mn(2+) as cofactor. Mg(2+) serves as cofactor.

It localises to the cytoplasm. The catalysed reaction is Endonucleolytic cleavage to 5'-phosphomonoester.. In terms of biological role, endonuclease that specifically degrades the RNA of RNA-DNA hybrids. This chain is Ribonuclease HII, found in Yersinia enterocolitica serotype O:8 / biotype 1B (strain NCTC 13174 / 8081).